Here is a 40-residue protein sequence, read N- to C-terminus: uncharacterized protein (40 aa).

The helical transmembrane segment at T20–I37 threads the bilayer.

The protein localises to the membrane. This is an uncharacterized protein from Archaeoglobus fulgidus (strain ATCC 49558 / DSM 4304 / JCM 9628 / NBRC 100126 / VC-16).